The following is a 545-amino-acid chain: 2-oxo-Delta(3)-4,5,5-trimethylcyclopentenylacetyl-CoA monooxygenase (545 aa).

Residues threonine 20, glutamate 39, 47-50, 59-60, tyrosine 65, and valine 112 contribute to the FAD site; these read TWYW and DT. 57–59 is a binding site for NADP(+); it reads RLD. Residues 193–199 and 216–217 each bind NADP(+); these read TGATGVQ and RT. An FAD-binding site is contributed by valine 446. Residue tryptophan 501 participates in NADP(+) binding.

The protein belongs to the FAD-binding monooxygenase family. As to quaternary structure, homodimer. It depends on FAD as a cofactor.

The catalysed reaction is [(1R)-2,2,3-trimethyl-5-oxocyclopent-3-enyl]acetyl-CoA + NADPH + O2 + H(+) = [(2R)-3,3,4-trimethyl-6-oxo-3,6-dihydro-1H-pyran-2-yl]acetyl-CoA + NADP(+) + H2O. It functions in the pathway terpene metabolism; (R)-camphor degradation. In terms of biological role, involved in the degradation of (+)-camphor. Catalyzes the lactonization of 2-oxo-delta(3)-4,5, 5-trimethylcyclopentenylacetyl-CoA (OT-CoA), a key intermediate in the metabolism of camphor. 2-Oxocyclopentyl ethyl acetate is also a good substrate, as is 2-oxocyclohexyl ethyl acetate and methyl-substituted cyclohexanones, but free acid is a poor substrate. The polypeptide is 2-oxo-Delta(3)-4,5,5-trimethylcyclopentenylacetyl-CoA monooxygenase (otemo) (Pseudomonas putida (Arthrobacter siderocapsulatus)).